The following is a 265-amino-acid chain: Glutamate racemase (265 aa).

Substrate contacts are provided by residues 7 to 8 (DS) and 39 to 40 (YG). Residue Cys-70 is the Proton donor/acceptor of the active site. Position 71–72 (71–72 (NT)) interacts with substrate. The active-site Proton donor/acceptor is the Cys-177.

This sequence belongs to the aspartate/glutamate racemases family.

It carries out the reaction L-glutamate = D-glutamate. Its pathway is cell wall biogenesis; peptidoglycan biosynthesis. Functionally, provides the (R)-glutamate required for cell wall biosynthesis. This chain is Glutamate racemase, found in Prochlorococcus marinus (strain NATL1A).